We begin with the raw amino-acid sequence, 138 residues long: Basic phospholipase A2 ammodytoxin C (138 aa).

A signal peptide spans 1 to 16; it reads MRTLWIVAVCLIGVEG. 7 disulfides stabilise this stretch: cysteine 42/cysteine 131, cysteine 44/cysteine 60, cysteine 59/cysteine 111, cysteine 65/cysteine 138, cysteine 66/cysteine 104, cysteine 73/cysteine 97, and cysteine 91/cysteine 102. Positions 43, 45, and 47 each coordinate Ca(2+). Histidine 63 is a catalytic residue. Aspartate 64 lines the Ca(2+) pocket. Residue aspartate 105 is part of the active site.

The protein belongs to the phospholipase A2 family. Group II subfamily. D49 sub-subfamily. As to quaternary structure, monomer. Binds to calmodulin, coagulation factor X (F10), 14-3-3 proteins gamma (YWHAG) and epsilon (YWHAE), and R25, a mitochondrial membrane protein. May bind to M-type PLA2 receptor (R-180). Ca(2+) serves as cofactor. Expressed by the venom gland.

The protein resides in the secreted. It is found in the host cytoplasm. The protein localises to the host cytosol. It catalyses the reaction a 1,2-diacyl-sn-glycero-3-phosphocholine + H2O = a 1-acyl-sn-glycero-3-phosphocholine + a fatty acid + H(+). Its function is as follows. Snake venom phospholipase A2 (PLA2) that acts as a presynaptic neurotoxin, an inhibitor of blood coagulation, and has been found to bind with high affinity to intracellular proteins. The response of indirectly stimulated neuromuscular preparations to ammodytoxin (Atx) is triphasic. The first phase, the transient inhibition of the acetylcholine (ACh) release, starts soon after the addition of Atx and lasts for several minutes. This phase is probably independent of Atx enzymatic activity. The effect may be due to the specific binding of the toxin to presynaptic receptors. These receptors, called N-type receptors, are still unidentified. It is noteworthy that a neuronal isoform of the M-type PLA2 receptor (R180) has been identified as a high-affinity receptor for Atx in neuronal plasma membranes. It was demonstrated however that this receptor is not essential for expression of neurotoxicity by Atx. The second phase corresponds to an augmentation of neurotransmitter release. A peak is reached 10-20 minutes after exposure of the preparation to Atx and is followed by a gradual reduction. In this phase, the enzymatic activity of Atx of the mammalian is not significant. It is speculated that the increased release of neurotransmitter in this phase is induced by the interference of Atx with voltage-gated potassium channels. Measurements of ionic showed however that voltage-gated potassium channels are not affected by Atx. The third phase of the response of neuromuscular preparations to Atx, which corresponds to a complete and irreversible paralysis, is clearly dependent on the hydrolytic activity of the toxin. In addition to its presynaptic neurotoxicity, Atx shows an anticoagulant activity by binding with high affinity to activated coagulation factor X (F10) thus inhibiting the formation of the prothrombinase complex (FX/FV) and its activity (IC(50) is 240 nM). Surprisingly, Atx was discovered to bind intracellular proteins such as calmodulin (CaM), 14-3-3 proteins gamma (YWHAG) and epsilon (YWHAE), as well as R25, a mitochondrial integral membrane protein found in cerebral cortex. These findings raised a doubt about the dogma of the exclusively extracellular action of PLA2s, defended by the potential instability of these molecules in the reducing environment of the eukaryotic cytosol coupled with their possible inability to act as enzymes in this cellular compartment, due to too low concentration of calcium ions. This hypothesis was challenged efficiently by demonstrating the internalization of AtxA into a culture cells, but still remains to be directly demonstrated in vivo. PLA2 catalyzes the calcium-dependent hydrolysis of the 2-acyl groups in 3-sn-phosphoglycerides. This chain is Basic phospholipase A2 ammodytoxin C, found in Vipera ammodytes ammodytes (Western sand viper).